Here is an 800-residue protein sequence, read N- to C-terminus: Nucleolar complex protein 3 homolog (800 aa).

2 stretches are compositionally biased toward basic residues: residues 1–19 (MGPA…RKLL) and 42–53 (KKQRKEQRKLHK). Disordered stretches follow at residues 1–91 (MGPA…TDMM) and 167–197 (KPVL…SAPL). Positions 65–74 (PLERYKKRPE) are enriched in basic and acidic residues. Residues 449 to 490 (SFKEKRKNLSRMQRKWKKAEEKLQKELLEAEATESKEKKIKL) adopt a coiled-coil conformation. Residues 780-800 (LQEEPEQMSLDFTSPHTQQEP) form a disordered region. Over residues 789–800 (LDFTSPHTQQEP) the composition is skewed to polar residues.

It belongs to the CBF/MAK21 family.

The protein resides in the nucleus. It is found in the nucleolus. The sequence is that of Nucleolar complex protein 3 homolog (noc3l) from Danio rerio (Zebrafish).